The chain runs to 765 residues: DNA topoisomerase 1 (765 aa).

Positions 1-23 (MSGDHLHNDSQIEADFRLNDSHK) are enriched in basic and acidic residues. The disordered stretch occupies residues 1-199 (MSGDHLHNDS…NKKKKPKKEE (199 aa)). S2 bears the N-acetylserine mark. Phosphoserine occurs at positions 2 and 10. Basic residues predominate over residues 24–39 (HKDKHKDREHRHKEHK). Residues 40–108 (KEKDREKSKH…DAKIKKEKEN (69 aa)) show a composition bias toward basic and acidic residues. Phosphoserine is present on S57. K101 is covalently cross-linked (Glycyl lysine isopeptide (Lys-Gly) (interchain with G-Cter in SUMO2)). K103 participates in a covalent cross-link: Glycyl lysine isopeptide (Lys-Gly) (interchain with G-Cter in SUMO); alternate. K103 participates in a covalent cross-link: Glycyl lysine isopeptide (Lys-Gly) (interchain with G-Cter in SUMO2); alternate. S112 is subject to Phosphoserine. Residue K117 forms a Glycyl lysine isopeptide (Lys-Gly) (interchain with G-Cter in SUMO); alternate linkage. K117 participates in a covalent cross-link: Glycyl lysine isopeptide (Lys-Gly) (interchain with G-Cter in SUMO2); alternate. K117 participates in a covalent cross-link: Glycyl lysine isopeptide (Lys-Gly) (interchain with G-Cter in SUMO1); alternate. Residues 129 to 166 (PKEDIKPLKRPRDEDDADYKPKKIKTEDTKKEKKRKLE) show a composition bias toward basic and acidic residues. Glycyl lysine isopeptide (Lys-Gly) (interchain with G-Cter in SUMO2) cross-links involve residues K134 and K148. Residue K153 forms a Glycyl lysine isopeptide (Lys-Gly) (interchain with G-Cter in SUMO); alternate linkage. Residue K153 forms a Glycyl lysine isopeptide (Lys-Gly) (interchain with G-Cter in SUMO2); alternate linkage. Residues K158 and K164 each participate in a glycyl lysine isopeptide (Lys-Gly) (interchain with G-Cter in SUMO2) cross-link. K172 is covalently cross-linked (Glycyl lysine isopeptide (Lys-Gly) (interchain with G-Cter in SUMO2); alternate). N6-acetyllysine; alternate is present on K172. Residues 179-199 (KDKDKKVPEPDNKKKKPKKEE) are compositionally biased toward basic and acidic residues. A Glycyl lysine isopeptide (Lys-Gly) (interchain with G-Cter in SUMO2) cross-link involves residue K204. An N6-acetyllysine modification is found at K280. Residue K336 forms a Glycyl lysine isopeptide (Lys-Gly) (interchain with G-Cter in SUMO2) linkage. Interaction with DNA stretches follow at residues 425–426 (KY) and 488–493 (RAGNEK). In terms of domain architecture, Topo IB-type catalytic spans 432 to 765 (SSRIKGEKDW…IDMADEDYEF (334 aa)). S506 carries the post-translational modification Phosphoserine; by CK2. K549 is covalently cross-linked (Glycyl lysine isopeptide (Lys-Gly) (interchain with G-Cter in SUMO2)). The interaction with DNA stretch occupies residues 585-587 (TAK). Residues K642, K700, and K712 each participate in a glycyl lysine isopeptide (Lys-Gly) (interchain with G-Cter in SUMO2) cross-link. Y723 serves as the catalytic O-(3'-phospho-DNA)-tyrosine intermediate.

This sequence belongs to the type IB topoisomerase family. Monomer. Interacts with ERCC6. Interacts with TPRN; TPRN interacts with a number of DNA damage response proteins, is recruited to sites of DNA damage and may play a role in DNA damage repair. As to quaternary structure, (Microbial infection) Interacts with SV40 Large T antigen; this interactions allows viral DNA replication. Post-translationally, sumoylated. Lys-117 is the main site of sumoylation. Sumoylation plays a role in partitioning TOP1 between nucleoli and nucleoplasm. Levels are dramatically increased on camptothecin (CPT) treatment. Phosphorylation at Ser-506 by CK2 increases binding to supercoiled DNA and sensitivity to camptothecin. Endothelial cells.

It is found in the nucleus. Its subcellular location is the nucleolus. The protein resides in the nucleoplasm. It catalyses the reaction ATP-independent breakage of single-stranded DNA, followed by passage and rejoining.. With respect to regulation, specifically inhibited by camptothecin (CPT), a plant alkaloid with antitumor activity. Its function is as follows. Releases the supercoiling and torsional tension of DNA introduced during the DNA replication and transcription by transiently cleaving and rejoining one strand of the DNA duplex. Introduces a single-strand break via transesterification at a target site in duplex DNA. The scissile phosphodiester is attacked by the catalytic tyrosine of the enzyme, resulting in the formation of a DNA-(3'-phosphotyrosyl)-enzyme intermediate and the expulsion of a 5'-OH DNA strand. The free DNA strand then rotates around the intact phosphodiester bond on the opposing strand, thus removing DNA supercoils. Finally, in the religation step, the DNA 5'-OH attacks the covalent intermediate to expel the active-site tyrosine and restore the DNA phosphodiester backbone. Regulates the alternative splicing of tissue factor (F3) pre-mRNA in endothelial cells. Involved in the circadian transcription of the core circadian clock component BMAL1 by altering the chromatin structure around the ROR response elements (ROREs) on the BMAL1 promoter. The polypeptide is DNA topoisomerase 1 (TOP1) (Homo sapiens (Human)).